Consider the following 733-residue polypeptide: Photosystem I P700 chlorophyll a apoprotein A2 (733 aa).

8 helical membrane passes run 46–69 (IFAS…FHVA), 135–158 (LYNG…LHLQ), 175–199 (LNHH…HVAI), 273–291 (MAHH…GHQY), 330–353 (LHFQ…QHMY), 369–395 (AALY…IFFI), 417–439 (AIIS…LYVH), and 516–534 (FLVH…LILV). [4Fe-4S] cluster-binding residues include Cys558 and Cys567. Transmembrane regions (helical) follow at residues 574-595 (AFYL…YFHW) and 642-664 (LSVW…MFLI). His653, Met661, and Tyr669 together coordinate chlorophyll a. Trp670 is a binding site for phylloquinone. The helical transmembrane segment at 706–726 (LVGLTHFAVGFVLTYAAFVIA) threads the bilayer.

It belongs to the PsaA/PsaB family. The PsaA/B heterodimer binds the P700 chlorophyll special pair and subsequent electron acceptors. PSI consists of a core antenna complex that captures photons, and an electron transfer chain that converts photonic excitation into a charge separation. The eukaryotic PSI reaction center is composed of at least 11 subunits. P700 is a chlorophyll a/chlorophyll a' dimer, A0 is one or more chlorophyll a, A1 is one or both phylloquinones and FX is a shared 4Fe-4S iron-sulfur center. serves as cofactor.

Its subcellular location is the plastid. The protein localises to the chloroplast thylakoid membrane. It carries out the reaction reduced [plastocyanin] + hnu + oxidized [2Fe-2S]-[ferredoxin] = oxidized [plastocyanin] + reduced [2Fe-2S]-[ferredoxin]. In terms of biological role, psaA and PsaB bind P700, the primary electron donor of photosystem I (PSI), as well as the electron acceptors A0, A1 and FX. PSI is a plastocyanin/cytochrome c6-ferredoxin oxidoreductase, converting photonic excitation into a charge separation, which transfers an electron from the donor P700 chlorophyll pair to the spectroscopically characterized acceptors A0, A1, FX, FA and FB in turn. Oxidized P700 is reduced on the lumenal side of the thylakoid membrane by plastocyanin or cytochrome c6. This Ostreococcus tauri protein is Photosystem I P700 chlorophyll a apoprotein A2.